Reading from the N-terminus, the 484-residue chain is tRNA sulfurtransferase (484 aa).

The region spanning 63 to 167 is the THUMP domain; the sequence is ELFAERLAHI…RDKLYMVSQR (105 aa). ATP contacts are provided by residues 185-186, Lys-267, Gly-289, and Gln-298; that span reads LI. Residues Cys-346 and Cys-458 are joined by a disulfide bond. Positions 406–484 constitute a Rhodanese domain; sequence AAGNEVIIDI…GYNNVKVYRP (79 aa). The active-site Cysteine persulfide intermediate is Cys-458.

It belongs to the ThiI family.

It is found in the cytoplasm. It catalyses the reaction [ThiI sulfur-carrier protein]-S-sulfanyl-L-cysteine + a uridine in tRNA + 2 reduced [2Fe-2S]-[ferredoxin] + ATP + H(+) = [ThiI sulfur-carrier protein]-L-cysteine + a 4-thiouridine in tRNA + 2 oxidized [2Fe-2S]-[ferredoxin] + AMP + diphosphate. The enzyme catalyses [ThiS sulfur-carrier protein]-C-terminal Gly-Gly-AMP + S-sulfanyl-L-cysteinyl-[cysteine desulfurase] + AH2 = [ThiS sulfur-carrier protein]-C-terminal-Gly-aminoethanethioate + L-cysteinyl-[cysteine desulfurase] + A + AMP + 2 H(+). It participates in cofactor biosynthesis; thiamine diphosphate biosynthesis. Catalyzes the ATP-dependent transfer of a sulfur to tRNA to produce 4-thiouridine in position 8 of tRNAs, which functions as a near-UV photosensor. Also catalyzes the transfer of sulfur to the sulfur carrier protein ThiS, forming ThiS-thiocarboxylate. This is a step in the synthesis of thiazole, in the thiamine biosynthesis pathway. The sulfur is donated as persulfide by IscS. The chain is tRNA sulfurtransferase from Shewanella amazonensis (strain ATCC BAA-1098 / SB2B).